We begin with the raw amino-acid sequence, 286 residues long: Pantothenate synthetase (286 aa).

30-37 (MGALHEGH) is a binding site for ATP. Residue H37 is the Proton donor of the active site. Q61 contacts (R)-pantoate. Q61 contacts beta-alanine. 147–150 (GEKD) is an ATP binding site. Q153 is a (R)-pantoate binding site. Residues L176 and 184 to 187 (HSSR) each bind ATP.

Belongs to the pantothenate synthetase family. Homodimer.

Its subcellular location is the cytoplasm. It catalyses the reaction (R)-pantoate + beta-alanine + ATP = (R)-pantothenate + AMP + diphosphate + H(+). Its pathway is cofactor biosynthesis; (R)-pantothenate biosynthesis; (R)-pantothenate from (R)-pantoate and beta-alanine: step 1/1. Its function is as follows. Catalyzes the condensation of pantoate with beta-alanine in an ATP-dependent reaction via a pantoyl-adenylate intermediate. The protein is Pantothenate synthetase of Bartonella tribocorum (strain CIP 105476 / IBS 506).